A 341-amino-acid chain; its full sequence is Phenylalanine--tRNA ligase alpha subunit (341 aa).

Glu255 contributes to the Mg(2+) binding site.

Belongs to the class-II aminoacyl-tRNA synthetase family. Phe-tRNA synthetase alpha subunit type 1 subfamily. Tetramer of two alpha and two beta subunits. The cofactor is Mg(2+).

It localises to the cytoplasm. The catalysed reaction is tRNA(Phe) + L-phenylalanine + ATP = L-phenylalanyl-tRNA(Phe) + AMP + diphosphate + H(+). This Natranaerobius thermophilus (strain ATCC BAA-1301 / DSM 18059 / JW/NM-WN-LF) protein is Phenylalanine--tRNA ligase alpha subunit.